The sequence spans 215 residues: ER lumen protein-retaining receptor B (215 aa).

A run of 6 helical transmembrane segments spans residues 6 to 26, 55 to 77, 98 to 118, 120 to 140, 149 to 169, and 178 to 198; these read LAGD…IHTI, FVSL…IVWY, WFLV…FTFL, VLWT…LVLL, LTGQ…LNWI, and FVHW…ADFF.

It belongs to the ERD2 family.

The protein localises to the golgi apparatus membrane. It localises to the endoplasmic reticulum membrane. Functionally, determines the specificity of the luminal endoplasmic reticulum protein retention system. Required for the retro-transport of calreticulin-3 (CRT3) from the Golgi to the ER. Specifically required for elongation factor Tu receptor (EFR) function in response to the pathogen-associated molecular pattern (PAMP) elf18. This Arabidopsis thaliana (Mouse-ear cress) protein is ER lumen protein-retaining receptor B (ERD2B).